The chain runs to 394 residues: Obg-like ATPase 1 (394 aa).

The OBG-type G domain maps to Leu25–Cys282. Residues Asn34–Thr39, Phe56–Glu60, and Asp94–Gly97 each bind ATP. Residues Ser38 and Thr58 each coordinate Mg(2+). Phe129 provides a ligand contact to GTP. Residues Asn230–Leu231, Leu231, and Ser263–Val265 contribute to the ATP site. GTP is bound at residue Ser263 to Val265. Positions Asn303–Phe386 constitute a TGS domain.

The protein belongs to the TRAFAC class OBG-HflX-like GTPase superfamily. OBG GTPase family. YchF/OLA1 subfamily. As to quaternary structure, monomer (Potential). Interacts with CAR4/GAP1. The cofactor is Mg(2+).

The protein resides in the cytoplasm. It localises to the cytosol. Activated by GAP1. Functionally, hydrolyzes ATP, and can also hydrolyze GTP with lower efficiency. Has lower affinity for GTP (Potential). Exhibits GTPase activity. Confers sensitivity to salinity stress by suppressing the anti-oxidation enzymatic activities and increasing lipid peroxidation thus leading to the accumulation of reactive oxygen species (ROS). Acts as a negative regulator of disease resistance against bacterial pathogen. The chain is Obg-like ATPase 1 from Arabidopsis thaliana (Mouse-ear cress).